Here is a 218-residue protein sequence, read N- to C-terminus: Adenylate kinase (218 aa).

11-16 (GAGKGT) is a binding site for ATP. An NMP region spans residues 31–60 (STGDMFREAMANKTKVGLEAKSYIDKGNLV). AMP contacts are provided by residues Thr-32, Arg-37, 58 to 60 (NLV), 86 to 89 (GFPR), and Gln-93. The interval 127-165 (ARYMCKNCGATYNKLSKQPKVEGTCDRCGSHEFYQREDD) is LID. An ATP-binding site is contributed by Arg-128. Positions 131 and 134 each coordinate Zn(2+). 137 to 138 (TY) contacts ATP. Residues Cys-151 and Cys-154 each coordinate Zn(2+). AMP-binding residues include Arg-162 and Arg-173. Gln-201 provides a ligand contact to ATP.

Belongs to the adenylate kinase family. As to quaternary structure, monomer.

The protein resides in the cytoplasm. The catalysed reaction is AMP + ATP = 2 ADP. Its pathway is purine metabolism; AMP biosynthesis via salvage pathway; AMP from ADP: step 1/1. Catalyzes the reversible transfer of the terminal phosphate group between ATP and AMP. Plays an important role in cellular energy homeostasis and in adenine nucleotide metabolism. This Lactobacillus helveticus (strain DPC 4571) protein is Adenylate kinase.